Consider the following 312-residue polypeptide: Serine/threonine-protein phosphatase PP1 isozyme 2 (312 aa).

A2 carries the post-translational modification N-acetylalanine. Positions 70, 72, 98, and 130 each coordinate Mn(2+). Residue H131 is the Proton donor of the active site. The Mn(2+) site is built by H179 and H254.

It belongs to the PPP phosphatase family. PP-1 subfamily. In terms of assembly, interacts with SRK2D/SNRK2.2 and SRK2E/SNRK2.6. Requires Mn(2+) as cofactor.

It is found in the nucleus. It localises to the cytoplasm. It catalyses the reaction O-phospho-L-seryl-[protein] + H2O = L-seryl-[protein] + phosphate. The catalysed reaction is O-phospho-L-threonyl-[protein] + H2O = L-threonyl-[protein] + phosphate. With respect to regulation, phosphatase activity is strongly reduced by the protein phosphatase inhibitor 2 (I-2). Its function is as follows. Serine/threonine-protein phosphatase that possesses phosphatase activity toward para-nitrophenyl phosphate (pNPP) in vitro. This Arabidopsis thaliana (Mouse-ear cress) protein is Serine/threonine-protein phosphatase PP1 isozyme 2.